The chain runs to 60 residues: U-actitoxin-Avd12b (60 aa).

The first 6 residues, 1-6, serve as a signal peptide directing secretion; that stretch reads SKEGMS. The propeptide occupies 7-12; it reads YEEPEN. Positions 14-56 constitute an EGF-like domain; that stretch reads EGVACTGQYAESFCLNGGTCRYIQSIGEYYCICVGDYTGHRCE. Intrachain disulfides connect Cys18–Cys33, Cys27–Cys44, and Cys46–Cys55.

The protein belongs to the EGF domain peptide family.

It localises to the secreted. The protein resides in the nematocyst. In terms of biological role, has both toxic and EGF activity. Its EGF activity consists of rounding cells (morphological change) and inducing tyrosine phosphorylation of the EGFR in A431 cells, but with a lower potency that human EGF. The protein is U-actitoxin-Avd12b of Anemonia viridis (Snakelocks anemone).